The chain runs to 529 residues: Glucose-6-phosphate isomerase (529 aa).

Glutamate 322 acts as the Proton donor in catalysis. Residues histidine 351 and lysine 455 contribute to the active site.

It belongs to the GPI family.

It is found in the cytoplasm. The enzyme catalyses alpha-D-glucose 6-phosphate = beta-D-fructose 6-phosphate. Its pathway is carbohydrate biosynthesis; gluconeogenesis. It functions in the pathway carbohydrate degradation; glycolysis; D-glyceraldehyde 3-phosphate and glycerone phosphate from D-glucose: step 2/4. Functionally, catalyzes the reversible isomerization of glucose-6-phosphate to fructose-6-phosphate. This Cyanothece sp. (strain PCC 7425 / ATCC 29141) protein is Glucose-6-phosphate isomerase.